A 130-amino-acid chain; its full sequence is Small ribosomal subunit protein uS9 (130 aa).

Residues 102-130 (GLLTRDSRMKERKKPGLKGARRAPQFSKR) form a disordered region. Over residues 111–130 (KERKKPGLKGARRAPQFSKR) the composition is skewed to basic residues.

This sequence belongs to the universal ribosomal protein uS9 family.

The sequence is that of Small ribosomal subunit protein uS9 from Listeria monocytogenes serovar 1/2a (strain ATCC BAA-679 / EGD-e).